Consider the following 149-residue polypeptide: FAD synthase (149 aa).

ATP is bound by residues 9–10 (TF), 14–17 (HPGH), N92, and Y119.

It belongs to the archaeal FAD synthase family. In terms of assembly, homodimer. Requires a divalent metal cation as cofactor.

The enzyme catalyses FMN + ATP + H(+) = FAD + diphosphate. The protein operates within cofactor biosynthesis; FAD biosynthesis; FAD from FMN: step 1/1. In terms of biological role, catalyzes the transfer of the AMP portion of ATP to flavin mononucleotide (FMN) to produce flavin adenine dinucleotide (FAD) coenzyme. This is FAD synthase from Methanoculleus marisnigri (strain ATCC 35101 / DSM 1498 / JR1).